Reading from the N-terminus, the 346-residue chain is Calcium homeostasis modulator protein 1 (346 aa).

At 1–21 (MMDKFRMIFQFLQSNQESFMN) the chain is on the cytoplasmic side. The tract at residues 10–37 (QFLQSNQESFMNGICGIMALASAQMYSA) is central pore. A helical transmembrane segment spans residues 22 to 37 (GICGIMALASAQMYSA). Residues 38 to 49 (FDFNCPCLPGYN) are Extracellular-facing. Disulfide bonds link Cys42–Cys127 and Cys44–Cys161. Residues 50-72 (AAYSAGILLAPPLVLFLLGLVMN) traverse the membrane as a helical segment. The phospholipid-binding stretch occupies residues 63–70 (VLFLLGLV). The Cytoplasmic segment spans residues 73 to 99 (NNVSMLAEEWKRPLGRRAKDPAVLRYM). A helical membrane pass occupies residues 100–125 (FCSMAQRALIAPVVWVAVTLLDGKCF). Residue Cys101 is the site of S-palmitoyl cysteine attachment. Residues 105–117 (QRALIAPVVWVAV) form a phospholipid-binding region. The Extracellular portion of the chain corresponds to 126 to 180 (LCAFCTAVPVSALGNGSLAPGLPAPELARLLARVPCPEIYDGDWLLAREVAVRYL). An N-linked (GlcNAc...) asparagine glycan is attached at Asn140. A helical membrane pass occupies residues 181-206 (RCISQALGWSFVLLTTLLAFVVRSVR). Residues 192 to 202 (VLLTTLLAFVV) form a phospholipid-binding region. Residues 207–346 (PCFTQAAFLK…KEVATYFSKV (140 aa)) lie on the Cytoplasmic side of the membrane. The S-palmitoyl cysteine moiety is linked to residue Cys208. A disordered region spans residues 313–346 (LRLGQEEPPLMGNGWAGGGPRPPRKEVATYFSKV).

It belongs to the CALHM family. In terms of assembly, oligomerizes to form hexamers and octamers. Does not form gap junctions. Associates with CALHM3 as a pore-forming subunit in a hetero-hexameric channel complex. Post-translationally, N-glycosylated. Assembly with CALHM3 is associated with N-glycan remodeling and formation of hybrid complex- and high mannose-type glycochains. This N-glycan processing regulates channel trafficking and gating kinetics. Palmitoylated by ZDHHC3, ZDHHC20 and possibly ZDHHC7. Palmitoylation regulates voltage-dependent gating of the channel by shifting it toward more depolarized potentials. In terms of tissue distribution, predominantly expressed in adult brain. Detected also in retinoic acid-differentiated SH-SY5Y cells. Specifically expressed in circumvallate taste bud cells.

Its subcellular location is the cell membrane. It is found in the endoplasmic reticulum membrane. The protein localises to the basolateral cell membrane. The enzyme catalyses ATP(in) = ATP(out). It catalyses the reaction Ca(2+)(in) = Ca(2+)(out). The catalysed reaction is Mg(2+)(in) = Mg(2+)(out). It carries out the reaction Na(+)(in) = Na(+)(out). The enzyme catalyses K(+)(in) = K(+)(out). It catalyses the reaction Li(+)(in) = Li(+)(out). The catalysed reaction is Rb(+)(in) = Rb(+)(out). It carries out the reaction Cs(+)(in) = Cs(+)(out). The enzyme catalyses chloride(in) = chloride(out). Its activity is regulated as follows. Regulated by membrane voltage and extracellular Ca(2+). Inhibited by Gd(3+), ruthenium red, and Zn(2+) and partially inhibited by 2-aminoethoxydiphenyl borate. Functionally, pore-forming subunit of gustatory voltage-gated ion channels required for sensory perception of sweet, bitter and umami tastes. With CALHM3 forms a fast-activating voltage-gated ATP-release channel in type II taste bud cells, ATP acting as a neurotransmitter to activate afferent neural gustatory pathways. Acts both as a voltage-gated and calcium-activated ion channel: mediates neuronal excitability in response to membrane depolarization and low extracellular Ca(2+) concentration. Has poor ion selectivity and forms a wide pore (around 14 Angstroms) that mediates permeation of small ions including Ca(2+), Na(+), K(+) and Cl(-), as well as larger ions such as ATP(4-). Mediates Ca(2+) influx and downstream activation of the ERK1 and ERK2 cascade in neurons. Triggers endoplasmic reticulum stress by reducing the Ca(2+) content of the endoplasmic reticulum. May indirectly control amyloid precursor protein (APP) proteolysis and aggregated amyloid-beta (Abeta) peptides levels in a Ca(2+)-dependent manner. This Homo sapiens (Human) protein is Calcium homeostasis modulator protein 1.